Consider the following 86-residue polypeptide: Acyl carrier protein (86 aa).

Residues 10–85 form the Carrier domain; sequence DKIEQKVIEM…DVIKYIKERQ (76 aa). Residue S45 is modified to O-(pantetheine 4'-phosphoryl)serine.

This sequence belongs to the acyl carrier protein (ACP) family. 4'-phosphopantetheine is transferred from CoA to a specific serine of apo-ACP by AcpS. This modification is essential for activity because fatty acids are bound in thioester linkage to the sulfhydryl of the prosthetic group.

The protein localises to the cytoplasm. It participates in lipid metabolism; fatty acid biosynthesis. In terms of biological role, carrier of the growing fatty acid chain in fatty acid biosynthesis. This chain is Acyl carrier protein, found in Rickettsia prowazekii (strain Madrid E).